The sequence spans 880 residues: Lon protease (880 aa).

Residues 1-37 form a disordered region; it reads MADYNDKNYLLHMSGPDSDTGPGIENEDPRAVENPGH. Residues 27-37 show a composition bias toward basic and acidic residues; it reads EDPRAVENPGH. A Lon N-terminal domain is found at 57–251; it reads LPILPVRDVV…LVNTQLQREV (195 aa). Position 404 to 411 (404 to 411) interacts with ATP; that stretch reads GPPGVGKT. The 182-residue stretch at 640–821 folds into the Lon proteolytic domain; the sequence is KLMPGMALGL…DELLPLVFEG (182 aa). Catalysis depends on residues serine 727 and lysine 770. The span at 826–836 shows a compositional bias: gly residues; the sequence is GGVSGAGQAGD. The tract at residues 826–880 is disordered; sequence GGVSGAGQAGDKGGKSKAAAGKKDVVAARPAKPAAPARRRKDKTEDELPTAEAGA. The span at 852-861 shows a compositional bias: low complexity; it reads AARPAKPAAP.

This sequence belongs to the peptidase S16 family. Homohexamer. Organized in a ring with a central cavity.

Its subcellular location is the cytoplasm. The enzyme catalyses Hydrolysis of proteins in presence of ATP.. Functionally, ATP-dependent serine protease that mediates the selective degradation of mutant and abnormal proteins as well as certain short-lived regulatory proteins. Required for cellular homeostasis and for survival from DNA damage and developmental changes induced by stress. Degrades polypeptides processively to yield small peptide fragments that are 5 to 10 amino acids long. Binds to DNA in a double-stranded, site-specific manner. The chain is Lon protease from Desulfovibrio desulfuricans (strain ATCC 27774 / DSM 6949 / MB).